A 146-amino-acid polypeptide reads, in one-letter code: UPF0735 ACT domain-containing protein TTE2621 (146 aa).

Positions 71–146 (TFSMVLEHMP…GVRKIEVLGE (76 aa)) constitute an ACT domain.

This sequence belongs to the UPF0735 family.

This chain is UPF0735 ACT domain-containing protein TTE2621, found in Caldanaerobacter subterraneus subsp. tengcongensis (strain DSM 15242 / JCM 11007 / NBRC 100824 / MB4) (Thermoanaerobacter tengcongensis).